A 114-amino-acid chain; its full sequence is Cholecystokinin (114 aa).

The N-terminal stretch at 1–20 (MNGGLCLCVLMAVLAAGTLA) is a signal peptide. Sulfotyrosine is present on Tyr-96. Position 102 is a phenylalanine amide (Phe-102). A propeptide spanning residues 106–114 (SAEEYEYTS) is cleaved from the precursor. 2 positions are modified to sulfotyrosine: Tyr-110 and Tyr-112.

Belongs to the gastrin/cholecystokinin family. As to quaternary structure, binds to CCK-A receptors in the pancreas and CCK-B receptors in the brain. The precursor is cleaved by proteases to produce a number of active cholecystokinins. Brain contains CCK-octapeptide (CCK8) and several CCK-desoctapeptides; whereas pig gut contains intact CCK33, CCK39, and CCK58 as well as CCK-octapeptide and the CCK-desoctapeptides. Distribution differences are due to tissue-specific post-translational processing events. In terms of processing, the precursor is cleaved by ACE, which removes the Gly-Arg-Arg peptide at the C-terminus, leading to mature hormone. Synthesized in both cerebral cortex and duodenal mucosa.

The protein localises to the secreted. Functionally, this peptide hormone induces gall bladder contraction and the release of pancreatic enzymes in the gut. Its function in the brain is not clear. Binding to CCK-A receptors stimulates amylase release from the pancreas, binding to CCK-B receptors stimulates gastric acid secretion. This chain is Cholecystokinin (CCK), found in Sus scrofa (Pig).